The following is a 274-amino-acid chain: Eukaryotic translation initiation factor 3 subunit G-2 (274 aa).

Residues 194 to 272 (SAVRISNLSE…LILCVEWSKP (79 aa)) enclose the RRM domain.

The protein belongs to the eIF-3 subunit G family. In terms of assembly, component of the eukaryotic translation initiation factor 3 (eIF-3) complex. The eIF-3 complex interacts with pix.

Its subcellular location is the cytoplasm. Its function is as follows. RNA-binding component of the eukaryotic translation initiation factor 3 (eIF-3) complex, which is involved in protein synthesis of a specialized repertoire of mRNAs and, together with other initiation factors, stimulates binding of mRNA and methionyl-tRNAi to the 40S ribosome. The eIF-3 complex specifically targets and initiates translation of a subset of mRNAs involved in cell proliferation. This subunit can bind 18S rRNA. In Drosophila pseudoobscura pseudoobscura (Fruit fly), this protein is Eukaryotic translation initiation factor 3 subunit G-2.